A 374-amino-acid chain; its full sequence is Fanconi anemia group F protein (374 aa).

Belongs to the multisubunit FA complex composed of FANCA, FANCB, FANCC, FANCE, FANCF, FANCG, FANCL/PHF9 and FANCM. The complex is not found in FA patients. In complex with FANCA, FANCG and FANCL, but not with FANCC, nor FANCE, interacts with HES1; this interaction may be essential for the stability and nuclear localization of FA core complex proteins.

It localises to the nucleus. DNA repair protein that may operate in a postreplication repair or a cell cycle checkpoint function. May be implicated in interstrand DNA cross-link repair and in the maintenance of normal chromosome stability. The polypeptide is Fanconi anemia group F protein (FANCF) (Homo sapiens (Human)).